A 56-amino-acid chain; its full sequence is Large ribosomal subunit protein uL30 (56 aa).

Belongs to the universal ribosomal protein uL30 family. As to quaternary structure, part of the 50S ribosomal subunit.

This chain is Large ribosomal subunit protein uL30, found in Oleidesulfovibrio alaskensis (strain ATCC BAA-1058 / DSM 17464 / G20) (Desulfovibrio alaskensis).